A 412-amino-acid polypeptide reads, in one-letter code: Divalent metal cation transporter MntH (412 aa).

11 helical membrane-spanning segments follow: residues 19–39, 46–66, 94–114, 122–142, 155–175, 196–216, 241–261, 290–310, 329–349, 350–370, and 389–409; these read FALM…GNFA, ASFG…AMLI, VWFY…AEFI, LILG…TFLI, LVIG…LVFS, AVFL…IYLH, IAMT…AAAF, IFGL…TLAG, SVTM…TRIL, VMSQ…LLIF, and IGWM…IGTL.

Belongs to the NRAMP family.

It is found in the cell inner membrane. Its function is as follows. H(+)-stimulated, divalent metal cation uptake system. The chain is Divalent metal cation transporter MntH from Enterobacter sp. (strain 638).